Consider the following 75-residue polypeptide: Putative snRNP Sm-like protein (75 aa).

Residues 4–75 (RPLDVIHRSL…NVLAISPTEE (72 aa)) form the Sm domain.

It belongs to the snRNP Sm proteins family.

The polypeptide is Putative snRNP Sm-like protein (Pyrococcus horikoshii (strain ATCC 700860 / DSM 12428 / JCM 9974 / NBRC 100139 / OT-3)).